Here is a 112-residue protein sequence, read N- to C-terminus: Large ribosomal subunit protein uL18 (112 aa).

Belongs to the universal ribosomal protein uL18 family. Part of the 50S ribosomal subunit; part of the 5S rRNA/L5/L18/L25 subcomplex. Contacts the 5S and 23S rRNAs.

Its function is as follows. This is one of the proteins that bind and probably mediate the attachment of the 5S RNA into the large ribosomal subunit, where it forms part of the central protuberance. This chain is Large ribosomal subunit protein uL18, found in Deinococcus deserti (strain DSM 17065 / CIP 109153 / LMG 22923 / VCD115).